The chain runs to 427 residues: Intermediate conductance calcium-activated potassium channel protein 4 (427 aa).

A helical transmembrane segment spans residues 29 to 49; that stretch reads ALVLAGTGIGLMVLHAEMLWF. Residues 59-79 form a helical membrane-spanning segment; it reads FLVKCTISISTFLLLCLIVAF. Residues 108-128 traverse the membrane as a helical segment; it reads IVLELVVCGLHPAPVRGPPCV. Residues 143–163 traverse the membrane as a helical segment; sequence GFLGQGEALLSLAMLLRLYLV. A helical transmembrane segment spans residues 207–227; it reads LLLGLTLGLWLTTAWVLSVAE. The pore-forming intramembrane region spans 241–261; the sequence is LWLIPITFLTIGYGDVVPGTM. A helical transmembrane segment spans residues 265–285; that stretch reads IVCLCTGVMGVCCTALLVAVV. Positions 286-347 are calmodulin-binding; the sequence is ARKLEFNKAE…RRHQRKLLAA (62 aa). Residue histidine 358 is modified to Phosphohistidine.

Belongs to the potassium channel KCNN family. KCa3.1/KCNN4 subfamily. As to quaternary structure, homodimer. Homotetramer. Heterotetramer of potassium channel proteins. Interacts with MTMR6; this interaction leads to selective dephosphorylation of PI(3)P in a lipid microdomain adjacent to KCNN4, resulting in a decrease of intermediate conductance calcium-activated potassium channel activity. Interacts (via the C-tail domain) with CALM1; the calmodulin binding is constitutive, does not require calcium and mediates calcium-dependent gating and four calmodulin molecules bind to one channel tetramer. Post-translationally, phosphorylation at His-358 by NDKB activates the intermediate conductance calcium-activated potassium channel activity, and conversely it's dephosphorylation by PHPT1 inhibits this activity. As to expression, widely expressed in non-excitable tissues.

Its subcellular location is the cell membrane. It is found in the cell projection. It localises to the ruffle membrane. It carries out the reaction K(+)(in) = K(+)(out). The channel is inhibited by clotrimazole and charybdotoxin but is insensitive to apamin. Intermediate conductance calcium-activated potassium channel that mediates the voltage-independent transmembrane transfer of potassium across the cell membrane through a constitutive interaction with calmodulin which binds the intracellular calcium allowing its opening. The current is characterized by a voltage-independent activation, an intracellular calcium concentration increase-dependent activation and a single-channel conductance of about 25 picosiemens. Also presents an inwardly rectifying current, thus reducing its already small outward conductance of potassium ions, which is particularly the case when the membrane potential displays positive values, above + 20 mV. Controls calcium influx during vascular contractility by being responsible of membrane hyperpolarization induced by vasoactive factors in proliferative vascular smooth muscle cell types. Following calcium influx, the consecutive activation of KCNN4 channel leads to a hyperpolarization of the cell membrane potential and hence an increase of the electrical driving force for further calcium influx promoting sustained calcium entry in response to stimulation with chemotactic peptides. Required for maximal calcium influx and proliferation during the reactivation of naive T-cells. Plays a role in the late stages of EGF-induced macropinocytosis through activation by PI(3)P. This Homo sapiens (Human) protein is Intermediate conductance calcium-activated potassium channel protein 4.